A 1288-amino-acid polypeptide reads, in one-letter code: MANVWGVRLADSLSSPTLESRNRSYTLHDFCSDLDASAGKEPWKALRNQRTSEIVAVRLFRPLQGLILDTHMYGFPGEFDAWEVFVKEKLRVLKYEVLRVYPISGYSNSHVNVFVANALVGAFLSNQAFYDLLPLLIINDTMINDLLGAGVSLAQFFQAHGDVLEVAAGRKYIQMNGYSNDDDDPPLFAKDLSDYAKAFYCESFEVLDRFFWTHDASAGVLVHYDKPTNGNHYLLGTLTQMVSAPPFIINATDAMMLESCVEQFAANAAARPAQPATRLDQCYHLRWGAQYVGEDSLTYRLGVLSLLATNGYQLARPIPKQLTNRWLSSFVSQIMSEGANETPLWPQERYVQIAYDSPSVVDGAVQYGYVRKNQLRLGMRISPIQSLSDVPAPVAWLPQYTIDQTALEDGDMVGHMSQLPLRPEYGSMWVGEALSYYVDYNQSHRVVAAKELPQLPDTYFDGDEQYGRSLFSLARRIGDRSLIKDTAVLKHAYQAIDPSTGREYLRAGQSVAYFGASAGHSGADQPLVIEPWLQGKISGVPSPASIRQFGYDVAKGAIVDLARPFPSGDYQFVYSDVDQVVDGHDDLSISSNLVESILSSCMQATSPGGSFVAKINFPTRSIWYYIEQKILPNITSYMIIKPFVTNNVEVFFVAFGVHRQSSLTWTSGVYFFLVDHFYRYETLSAISRQLPSYGYVDDGSSVTGLEVISIENPGFSTMTQASRVAISALCANTGNSRKTISIYESHGARVLMLVSRRSPASAKRKARLRYLPLIDPRSLEVQSRTIMPSTPVLFENSNGASPHVCLTMMYNYEVSSAVYDGDVVLDLGTGPEAKILELIPPTSPATCVDIRPTAQPTGCWNVRTTFLQLDYLSDGWITGVRGDIVTCMLSLGAAAAGKSMTFDAAFQQFVRVIAQSAANVVLVQVNCPTDVIRSVRGYLEIDQTSKRYRFPKFGRDEPYSDMESLERICRATWPNCSITWVPLSYDLRWTRLALLEAATLNSASIRIAELMYKYMPVMRVDIHGLPMNKSGNFVVGQNCSLTIPGFNAQDTFNCYYNSALAFSTEDVNAAMIPSVTATFDNAKNEWTLDMVFSDAGIYTMQAVVGVNASPIALGSFVVDSPDVDITDAWPAQLDFTIAGTDVDITVNPYYRLMAFVKIDGQWQIANPDKFQFFASATGTLTMNVKLDIADKYLLYYIRDVQSREVGFYIQHPLQLLNTITLPTNEDLFLSAPDMREWAVKESGNTICILNSQGFIPPQDWDVLTDTISWSPSLPTYVVPPGDYTLTPL.

892–899 (GAAAAGKS) contacts ATP.

The protein belongs to the orthoreovirus lambda-2 protein family. In terms of assembly, interacts with protein mu-NS; in viral inclusions.

The protein resides in the virion. The catalysed reaction is a 5'-end diphospho-ribonucleoside in mRNA + GTP + H(+) = a 5'-end (5'-triphosphoguanosine)-ribonucleoside in mRNA + diphosphate. It carries out the reaction a 5'-end (5'-triphosphoguanosine)-ribonucleoside in mRNA + S-adenosyl-L-methionine = a 5'-end (N(7)-methyl 5'-triphosphoguanosine)-ribonucleoside in mRNA + S-adenosyl-L-homocysteine. Its function is as follows. Outer capsid protein involved in mRNA capping. Catalyzes the last 3 enzymatic activities for formation of the 5' cap structure on the viral plus-strand transcripts, namely the RNA guanylyltransferase, RNA-7N- and RNA-2'O-methyltransferase activities. This Reovirus type 2 (strain D5/Jones) (T2J) protein is Outer capsid protein lambda-2 (L2).